A 426-amino-acid polypeptide reads, in one-letter code: Glutamate-1-semialdehyde 2,1-aminomutase (426 aa).

Lys-265 is modified (N6-(pyridoxal phosphate)lysine).

The protein belongs to the class-III pyridoxal-phosphate-dependent aminotransferase family. HemL subfamily. Homodimer. Pyridoxal 5'-phosphate is required as a cofactor.

The protein localises to the cytoplasm. It catalyses the reaction (S)-4-amino-5-oxopentanoate = 5-aminolevulinate. It participates in porphyrin-containing compound metabolism; protoporphyrin-IX biosynthesis; 5-aminolevulinate from L-glutamyl-tRNA(Glu): step 2/2. In Escherichia coli O139:H28 (strain E24377A / ETEC), this protein is Glutamate-1-semialdehyde 2,1-aminomutase.